The chain runs to 968 residues: Isoleucine--tRNA ligase (968 aa).

Residues 68 to 78 carry the 'HIGH' region motif; that stretch reads PYANGALHMGH. Glu-584 is an L-isoleucyl-5'-AMP binding site. The 'KMSKS' region motif lies at 625–629; sequence KMSKS. Lys-628 contacts ATP. Cys-938, Cys-941, Cys-958, and Cys-961 together coordinate Zn(2+).

Belongs to the class-I aminoacyl-tRNA synthetase family. IleS type 1 subfamily. As to quaternary structure, monomer. Requires Zn(2+) as cofactor.

The protein localises to the cytoplasm. The enzyme catalyses tRNA(Ile) + L-isoleucine + ATP = L-isoleucyl-tRNA(Ile) + AMP + diphosphate. Functionally, catalyzes the attachment of isoleucine to tRNA(Ile). As IleRS can inadvertently accommodate and process structurally similar amino acids such as valine, to avoid such errors it has two additional distinct tRNA(Ile)-dependent editing activities. One activity is designated as 'pretransfer' editing and involves the hydrolysis of activated Val-AMP. The other activity is designated 'posttransfer' editing and involves deacylation of mischarged Val-tRNA(Ile). The polypeptide is Isoleucine--tRNA ligase (Synechococcus sp. (strain CC9311)).